A 633-amino-acid polypeptide reads, in one-letter code: MSASWADVADSENTGSGSSNQNSHPSRPAYVPPHLRNRPAASEPVAPLPANDRVGYGGPPSGSRWAPGGSGVGVGGGGGYRADAGRPGSGSGYGGRGGGGWNNRSGGWDRREREVNPFENDDSEPEPAFTEQDNTVINFDAYEDIPIETSGDNVPPPVNTFAEIDLGEALNLNIRRCKYVKPTPVQRHAIPILLEGRDLMACAQTGSGKTAAFCFPIISGIMKDQHVQRPRGSRTVYPLAVILSPTRELASQIHDEAKKFSYQTGVKVVVAYGGTPINQQLRELERGVDILVATPGRLNDLLERARVSMQMIRFLALDEADRMLDMGFEPQIRKIVEQMDMPPRGVRQTLLFSATFPREIQRLAADFLANYIFLAVGRVGSSTDLIVQRVEFVLDSDKRSHLMDLLHAQRENGIQGKQALTLVFVETKRGADSLENWLCINGFPATSIHGDRTQQEREVALKAFKSGRTPILVATDVAARGLDIPHVAHVVNFDLPNDIDDYVHRIGRTGRAGKSGLATAFFNDGNTSLARPLAELMQEANQEVPEWLTRYASRSSFGGGKNRRSGGRFGGRDFRREGSFGSGRGGYGGGGGGYGGGGGYGGGGGYGGGGGYGGGYGGASSGGYGGEPPSAWD.

Positions 1-110 (MSASWADVAD…WNNRSGGWDR (110 aa)) are disordered. Serine 2 carries the N-acetylserine modification. Residues 11 to 25 (SENTGSGSSNQNSHP) show a composition bias toward polar residues. Composition is skewed to gly residues over residues 68–80 (GGSGVGVGGGGGY) and 87–101 (PGSGSGYGGRGGGGW). Positions 159–187 (NTFAEIDLGEALNLNIRRCKYVKPTPVQR) match the Q motif motif. The region spanning 190-374 (IPILLEGRDL…ADFLANYIFL (185 aa)) is the Helicase ATP-binding domain. Residue 203–210 (AQTGSGKT) coordinates ATP. The DEAD box motif lies at 318 to 321 (DEAD). In terms of domain architecture, Helicase C-terminal spans 401–552 (HLMDLLHAQR…EVPEWLTRYA (152 aa)). Residues 555 to 600 (SSFGGGKNRRSGGRFGGRDFRREGSFGSGRGGYGGGGGGYGGGGGY) are disordered. The span at 580–600 (FGSGRGGYGGGGGGYGGGGGY) shows a compositional bias: gly residues.

Belongs to the DEAD box helicase family. DDX3/DED1 subfamily.

The catalysed reaction is ATP + H2O = ADP + phosphate + H(+). In Arabidopsis thaliana (Mouse-ear cress), this protein is DEAD-box ATP-dependent RNA helicase 37 (RH37).